The chain runs to 423 residues: Kynureninase (423 aa).

Pyridoxal 5'-phosphate-binding positions include Leu105, Ser106, 133 to 136 (FPSD), Asp218, His221, and Tyr243. Lys244 carries the N6-(pyridoxal phosphate)lysine modification. Positions 273 and 301 each coordinate pyridoxal 5'-phosphate.

It belongs to the kynureninase family. In terms of assembly, homodimer. Pyridoxal 5'-phosphate serves as cofactor.

The enzyme catalyses L-kynurenine + H2O = anthranilate + L-alanine + H(+). The catalysed reaction is 3-hydroxy-L-kynurenine + H2O = 3-hydroxyanthranilate + L-alanine + H(+). It participates in amino-acid degradation; L-kynurenine degradation; L-alanine and anthranilate from L-kynurenine: step 1/1. The protein operates within cofactor biosynthesis; NAD(+) biosynthesis; quinolinate from L-kynurenine: step 2/3. In terms of biological role, catalyzes the cleavage of L-kynurenine (L-Kyn) and L-3-hydroxykynurenine (L-3OHKyn) into anthranilic acid (AA) and 3-hydroxyanthranilic acid (3-OHAA), respectively. The protein is Kynureninase of Xanthomonas axonopodis pv. citri (strain 306).